Here is a 324-residue protein sequence, read N- to C-terminus: Phospho-N-acetylmuramoyl-pentapeptide-transferase (324 aa).

10 consecutive transmembrane segments (helical) span residues 5–25, 50–70, 77–97, 117–137, 147–167, 176–196, 203–223, 227–247, 250–270, and 304–324; these read VMVL…PLFI, GTPT…TLLM, LSVE…LGFL, LIGQ…SGFS, LSIN…VGGS, LDGL…VLAW, IAIF…FNAH, VFMG…VAIL, LEIL…SVII, and VTFW…EVWI.

It belongs to the glycosyltransferase 4 family. MraY subfamily. Requires Mg(2+) as cofactor.

It localises to the cell membrane. The catalysed reaction is UDP-N-acetyl-alpha-D-muramoyl-L-alanyl-gamma-D-glutamyl-meso-2,6-diaminopimeloyl-D-alanyl-D-alanine + di-trans,octa-cis-undecaprenyl phosphate = di-trans,octa-cis-undecaprenyl diphospho-N-acetyl-alpha-D-muramoyl-L-alanyl-D-glutamyl-meso-2,6-diaminopimeloyl-D-alanyl-D-alanine + UMP. It participates in cell wall biogenesis; peptidoglycan biosynthesis. Functionally, catalyzes the initial step of the lipid cycle reactions in the biosynthesis of the cell wall peptidoglycan: transfers peptidoglycan precursor phospho-MurNAc-pentapeptide from UDP-MurNAc-pentapeptide onto the lipid carrier undecaprenyl phosphate, yielding undecaprenyl-pyrophosphoryl-MurNAc-pentapeptide, known as lipid I. The polypeptide is Phospho-N-acetylmuramoyl-pentapeptide-transferase (Geobacillus sp. (strain WCH70)).